Here is a 66-residue protein sequence, read N- to C-terminus: Large ribosomal subunit protein bL33c (66 aa).

The protein belongs to the bacterial ribosomal protein bL33 family.

It is found in the plastid. The protein resides in the chloroplast. The sequence is that of Large ribosomal subunit protein bL33c from Brachypodium distachyon (Purple false brome).